The sequence spans 567 residues: 2-succinyl-5-enolpyruvyl-6-hydroxy-3-cyclohexene-1-carboxylate synthase (567 aa).

This sequence belongs to the TPP enzyme family. MenD subfamily. In terms of assembly, homodimer. It depends on Mg(2+) as a cofactor. The cofactor is Mn(2+). Thiamine diphosphate is required as a cofactor.

The enzyme catalyses isochorismate + 2-oxoglutarate + H(+) = 5-enolpyruvoyl-6-hydroxy-2-succinyl-cyclohex-3-ene-1-carboxylate + CO2. The protein operates within quinol/quinone metabolism; 1,4-dihydroxy-2-naphthoate biosynthesis; 1,4-dihydroxy-2-naphthoate from chorismate: step 2/7. It participates in quinol/quinone metabolism; menaquinone biosynthesis. In terms of biological role, catalyzes the thiamine diphosphate-dependent decarboxylation of 2-oxoglutarate and the subsequent addition of the resulting succinic semialdehyde-thiamine pyrophosphate anion to isochorismate to yield 2-succinyl-5-enolpyruvyl-6-hydroxy-3-cyclohexene-1-carboxylate (SEPHCHC). The sequence is that of 2-succinyl-5-enolpyruvyl-6-hydroxy-3-cyclohexene-1-carboxylate synthase from Yersinia pestis bv. Antiqua (strain Angola).